Here is a 155-residue protein sequence, read N- to C-terminus: uncharacterized protein (155 aa).

The span at 28–38 shows a compositional bias: basic and acidic residues; it reads KKGKDRPREDG. A disordered region spans residues 28–52; that stretch reads KKGKDRPREDGTQQQPSESKGEAAC.

This is an uncharacterized protein from Dryophytes versicolor (chameleon treefrog).